The following is a 272-amino-acid chain: HMP-PP phosphatase (272 aa).

Catalysis depends on Asp-8, which acts as the Nucleophile. 3 residues coordinate Mg(2+): Asp-8, Asp-10, and Asp-212.

It belongs to the HAD-like hydrolase superfamily. Cof family. The cofactor is Mg(2+).

The enzyme catalyses 4-amino-2-methyl-5-(diphosphooxymethyl)pyrimidine + H2O = 4-amino-2-methyl-5-(phosphooxymethyl)pyrimidine + phosphate + H(+). Catalyzes the hydrolysis of 4-amino-2-methyl-5-hydroxymethylpyrimidine pyrophosphate (HMP-PP) to 4-amino-2-methyl-5-hydroxymethylpyrimidine phosphate (HMP-P). This chain is HMP-PP phosphatase, found in Shigella flexneri serotype 5b (strain 8401).